The primary structure comprises 642 residues: Threonine--tRNA ligase (642 aa).

A TGS domain is found at 1–61 (MPIITLPDGS…TADSELAIIT (61 aa)). Residues 243–534 (DHRKIGKQLD…LIEEYAGKFP (292 aa)) are catalytic. 3 residues coordinate Zn(2+): cysteine 334, histidine 385, and histidine 511.

The protein belongs to the class-II aminoacyl-tRNA synthetase family. Homodimer. Zn(2+) serves as cofactor.

It localises to the cytoplasm. The enzyme catalyses tRNA(Thr) + L-threonine + ATP = L-threonyl-tRNA(Thr) + AMP + diphosphate + H(+). Its function is as follows. Catalyzes the attachment of threonine to tRNA(Thr) in a two-step reaction: L-threonine is first activated by ATP to form Thr-AMP and then transferred to the acceptor end of tRNA(Thr). Also edits incorrectly charged L-seryl-tRNA(Thr). This Shewanella frigidimarina (strain NCIMB 400) protein is Threonine--tRNA ligase.